The primary structure comprises 7119 residues: Replicase polyprotein 1ab (7119 aa).

One can recognise a CoV Nsp1 globular domain in the interval 25–151 (RSDHVACTVP…EYTFLLRKNG (127 aa)). One can recognise a BetaCoV Nsp1 C-terminal domain in the interval 167 to 195 (TPYVEILDDLEADPTGKYSQNLLKKLIGG). Positions 197–472 (CIPIDQYMCG…WDKVVETANL (276 aa)) constitute a CoV Nsp2 N-terminal domain. The Zn(2+) site is built by Cys-339, Cys-342, Cys-358, and Cys-360. The C4 stretch occupies residues 339–360 (CNACGRGTWCTGNAIQGFACDC). A CoV Nsp2 middle domain is found at 478 to 712 (QRSLNFCQQF…LDIMSKAMKL (235 aa)). Residues 714–847 (HTNVSWAGTK…VSTLFRLKGG (134 aa)) form the CoV Nsp2 C-terminal domain. In terms of domain architecture, Ubiquitin-like 1 spans 851–960 (KKVTFGDVNT…MTFSINPVED (110 aa)). Macro domains lie at 1152–1321 (DLSK…KPDG) and 1322–1446 (LVYS…AIQT). Positions 1446–1519 (TPETAFINNV…LEACRAYLTS (74 aa)) constitute a DPUP domain. The Ubiquitin-like 2 domain occupies 1524–1579 (QVNIEVLVTIDGVNFRTVILNDTTTFRKQLGATFYKGVDISDAFPTVKMGGESLFV). One can recognise a Peptidase C16 domain in the interval 1593–1864 (EYYGTSDVTF…KVEVNPDLSN (272 aa)). Cys-1634 (for PL-PRO activity) is an active-site residue. Residues Cys-1714, Cys-1717, Cys-1749, and Cys-1751 each contribute to the Zn(2+) site. The segment at 1714–1751 (CTVCGIRDIEYTGMRACVYAGVNSMEELQSVFNETCVC) adopts a C4-type zinc-finger fold. Active-site for PL-PRO activity residues include His-1800 and Asp-1815. The region spanning 1878–1995 (TIKYSPATIL…QLYDVAPIVL (118 aa)) is the Nucleic acid-binding domain. The 122-residue stretch at 2012–2133 (HNVPVVDDVP…AKITVTATTA (122 aa)) folds into the G2M domain. 3 helical membrane passes run 2112–2132 (VLLG…TATT), 2145–2165 (FVVN…LFFL), and 2222–2242 (LFLL…LVLF). Residues 2112 to 2395 (VLLGASSLFA…VTHIPLHGLV (284 aa)) are HD1. The 67-residue stretch at 2259-2325 (LAIYKEVRSY…LQMLQTHITS (67 aa)) folds into the 3Ecto domain. 2 cysteine pairs are disulfide-bonded: Cys-2275-Cys-2303 and Cys-2293-Cys-2300. 3 consecutive transmembrane segments (helical) span residues 2326 to 2346 (YVLN…YVLY), 2350 to 2370 (FNVL…SAFV), and 2375 to 2395 (YNYI…HGLV). Residues 2409-2499 (KFYSHVINGC…TLRRLIKPTD (91 aa)) are Y1. Positions 2409–2782 (KFYSHVINGC…LSVKFSATKI (374 aa)) constitute a CoV Nsp3 Y domain. Positions 2413, 2418, 2423, 2426, 2459, 2462, 2466, and 2469 each coordinate Zn(2+). Positions 2413–2426 (HVINGCKDTACLLC) are ZF1. The segment at 2459-2469 (CCKHNWNCVEC) is ZF2. The segment at 2500–2598 (QSHYYVDSVV…LVDVNLVTTV (99 aa)) is Y2. Residues 2500–2782 (QSHYYVDSVV…LSVKFSATKI (283 aa)) are coV-Y. The interval 2599 to 2681 (GDSREIAIKM…DALQYAHKND (83 aa)) is Y3. A Y4 region spans residues 2682–2782 (IQLTTECYNN…LSVKFSATKI (101 aa)). A run of 4 helical transmembrane segments spans residues 2800 to 2820 (GYCI…FCLP), 3072 to 3092 (STSL…FYYI), 3105 to 3125 (CAVV…FIVA), and 3149 to 3169 (AFIM…IWML). The HD2 stretch occupies residues 2800-3169 (GYCILTLFVF…FGAVVPIWML (370 aa)). The 97-residue stretch at 3195–3291 (VFTDGKLNCS…NCSVTSSVLQ (97 aa)) folds into the Nsp4C domain. The Peptidase C30 domain occupies 3292 to 3597 (SGLVKMSAPS…NMQVMGVVMQ (306 aa)). Catalysis depends on for 3CL-PRO activity residues His-3332 and Cys-3439. 7 consecutive transmembrane segments (helical) span residues 3603 to 3623 (ISYG…VSVM), 3637 to 3657 (TIPT…MFTV), 3662 to 3682 (TFMS…NIVY), 3707 to 3727 (RTTH…AIIV), 3735 to 3755 (MSNL…YVIG), 3784 to 3804 (LAKF…FILP), and 3808 to 3828 (LVLL…GVFS). Residues 3603–3828 (ISYGFIHWLI…MCTMYFGVFS (226 aa)) form an HD3 region. The RdRp Nsp7 cofactor domain maps to 3890–3972 (SKLTDLKCTS…DLFENSSVLQ (83 aa)). The RdRp Nsp8 cofactor domain occupies 3973–4171 (ATLTEFSHLA…RSSSSAVKLQ (199 aa)). In terms of domain architecture, Nsp9 ssRNA-binding spans 4172-4281 (NNEIHPKGLK…GHIAATVRLQ (110 aa)). In terms of domain architecture, ExoN/MTase coactivator spans 4282-4420 (AGANTEFASN…DALRNNTVPQ (139 aa)). Cys-4355, Cys-4358, His-4364, Cys-4371, Cys-4397, Cys-4400, Cys-4408, and Cys-4410 together coordinate Zn(2+). Zinc fingers lie at residues 4355 to 4371 (CLYC…SGVC) and 4397 to 4410 (CNVC…GCNC). Residues 4426 to 4683 (FLNRVRGSSV…AAETHKDCDF (258 aa)) enclose the NiRAN domain. Mn(2+) contacts are provided by Asn-4631 and Asp-4640. Residues 4688-4786 (IEWPLLEYDY…MNMDFNIHRH (99 aa)) form the Nsp12 Interface domain. 5 residues coordinate Zn(2+): His-4717, Cys-4723, Cys-4728, Cys-4732, and Cys-4909. One can recognise a Nsp12 RNA-dependent RNA polymerase domain in the interval 4787 to 5354 (RLALKELMMY…DLYSSPTTLQ (568 aa)). Positions 4789-5003 (ALKELMMYAA…HQKMLKSMAA (215 aa)) are rdRp Fingers N-ter. A rdRp Palm N-ter region spans residues 5004 to 5042 (TRGATCVIGTTKFYGGWDFMLKTLYKDVESPHLMGWDYP). Residues 5034 to 5196 (PHLMGWDYPK…CYNSDYAAKG (163 aa)) form the RdRp catalytic domain. The segment at 5043-5101 (KCDRAMPNMCRILASLILARKHSTCCTNSDRFYRLANECAQVLSEYVLCGGGYYVKPGG) is rdRp Fingers C-ter. Zn(2+) contacts are provided by His-5064, Cys-5067, and Cys-5068. Positions 5102 to 5237 (TSSGDATTAY…EKGPHEFCSQ (136 aa)) are rdRp Palm C-ter. Residues Ser-5181, Asp-5182, and Asp-5183 contribute to the active site. A rdRp Thumb region spans residues 5238–5354 (HTLYIKDGDD…DLYSSPTTLQ (117 aa)). The CV ZBD domain occupies 5355 to 5467 (AVGSCVVCHS…MEFNRLATCD (113 aa)). Zn(2+) contacts are provided by Cys-5359, Cys-5362, Cys-5370, Cys-5373, Cys-5380, Cys-5383, His-5387, His-5393, Cys-5404, Cys-5409, Cys-5426, and His-5429. The (+)RNA virus helicase ATP-binding domain occupies 5611–5792 (TVPEEFANHV…MCNLGPDIFL (182 aa)). ATP is bound at residue 5636-5643 (GPPGTGKS). In terms of domain architecture, (+)RNA virus helicase C-terminal spans 5793–5967 (SVCYRCPKEI…GLFKDCSRED (175 aa)). The region spanning 6024 to 6239 (LFITRDEAIR…RCLAIYDCFI (216 aa)) is the ExoN domain. Residues Asp-6042, Glu-6044, and Glu-6143 contribute to the active site. The Zn(2+) site is built by Cys-6159, Cys-6162, Cys-6178, His-6181, His-6209, Cys-6213, and His-6216. Active-site residues include His-6220 and Asp-6225. Cys-6231 contributes to the Zn(2+) binding site. The N7-MTase domain maps to 6248 to 6475 (YPYISHEQKL…NLWSTFVKVQ (228 aa)). An S-adenosyl-L-methionine-binding site is contributed by 6283-6289 (DIGNPKG). The tract at residues 6361-6375 (CNGGSLYVNKHAFHT) is gpppA-binding. 4 residues coordinate Zn(2+): Cys-6399, Cys-6421, Cys-6432, and His-6435. A Nsp15 N-terminal oligomerization domain is found at 6476 to 6536 (GLENIAFNVI…NVAFELYAKR (61 aa)). Residues 6537 to 6658 (AVRSHPDLNL…LYKKVNNEFV (122 aa)) form the AV-Nsp11N/CoV-Nsp15M domain. Positions 6675 to 6814 (TVLTPMEEDF…RDGKVQTFYP (140 aa)) constitute a NendoU domain. Residues His-6705, His-6720, Lys-6760, Lys-6863, Asp-6947, Lys-6987, and Glu-7020 contribute to the active site. The region spanning 6819–7113 (TNDWKPGLTM…TLNVSTDVLV (295 aa)) is the Nidovirus-type SAM-dependent 2'-O-MTase domain.

The protein belongs to the coronaviruses polyprotein 1ab family. Interacts with host PHB and PHB2. As to quaternary structure, interacts with papain-like protease nsp3 and non-structural protein 6. In terms of assembly, monomer. Homodimer. Only the homodimer shows catalytic activity. Interacts with nsp8 and nsp12 to form the replication-transcription complex (RTC): nsp12, nsp7, two subunits of nsp8, and up to two subunits of nsp13. As to quaternary structure, interacts with nsp7, nsp13 and nsp12 to form the replication-transcription complex (RTC): nsp12, nsp7, two subunits of nsp8, and up to two subunits of nsp13. In terms of assembly, interacts with nsp12. Interacts with proofreading exoribonuclease nsp14 and 2'-O-methyltransferase nsp16; these interactions enhance nsp14 and nsp16 enzymatic activities. As to quaternary structure, interacts with nsp7 and nsp8 to form the replication-transcription complex (RTC): nsp12, nsp7, two subunits of nsp8, and up to two subunits of nsp13. Interacts with nsp9. In terms of assembly, interacts with nsp8 to form the replication-transcription complex (RTC): nsp12, nsp7, two subunits of nsp8, and up to two subunits of nsp13. Requires Mn(2+) as cofactor. The cofactor is Mg(2+). Post-translationally, specific enzymatic cleavages in vivo by its own proteases yield mature proteins. 3CL-PRO and PL-PRO proteinases are autocatalytically processed.

It localises to the host membrane. The protein localises to the host cytoplasm. It is found in the host perinuclear region. Its subcellular location is the host endoplasmic reticulum-Golgi intermediate compartment. The enzyme catalyses RNA(n) + a ribonucleoside 5'-triphosphate = RNA(n+1) + diphosphate. It carries out the reaction ATP + H2O = ADP + phosphate + H(+). It catalyses the reaction Thiol-dependent hydrolysis of ester, thioester, amide, peptide and isopeptide bonds formed by the C-terminal Gly of ubiquitin (a 76-residue protein attached to proteins as an intracellular targeting signal).. The catalysed reaction is a 5'-end (N(7)-methyl 5'-triphosphoguanosine)-ribonucleoside in mRNA + S-adenosyl-L-methionine = a 5'-end (N(7)-methyl 5'-triphosphoguanosine)-(2'-O-methyl-ribonucleoside) in mRNA + S-adenosyl-L-homocysteine + H(+). The enzyme catalyses uridylyl-uridylyl-ribonucleotide-RNA = a 3'-end uridylyl-2',3'-cyclophospho-uridine-RNA + a 5'-end dephospho-ribonucleoside-RNA. It carries out the reaction a 5'-end diphospho-ribonucleoside in mRNA + GTP + H(+) = a 5'-end (5'-triphosphoguanosine)-ribonucleoside in mRNA + diphosphate. It catalyses the reaction a 5'-end (5'-triphosphoguanosine)-ribonucleoside in mRNA + S-adenosyl-L-methionine = a 5'-end (N(7)-methyl 5'-triphosphoguanosine)-ribonucleoside in mRNA + S-adenosyl-L-homocysteine. In terms of biological role, the replicase polyprotein of coronaviruses is a multifunctional protein: it contains the activities necessary for the transcription of negative stranded RNA, leader RNA, subgenomic mRNAs and progeny virion RNA as well as proteinases responsible for the cleavage of the polyprotein into functional products. Inhibits host translation by interacting with the 40S ribosomal subunit. The nsp1-40S ribosome complex further induces an endonucleolytic cleavage near the 5'UTR of host mRNAs, targeting them for degradation. Viral mRNAs are not susceptible to nsp1-mediated endonucleolytic RNA cleavage thanks to the presence of a 5'-end leader sequence and are therefore protected from degradation. By suppressing host gene expression, nsp1 facilitates efficient viral gene expression in infected cells and evasion from host immune response. Its function is as follows. May play a role in the modulation of host cell survival signaling pathway by interacting with host PHB and PHB2. Indeed, these two proteins play a role in maintaining the functional integrity of the mitochondria and protecting cells from various stresses. Functionally, responsible for the cleavages located at the N-terminus of the replicase polyprotein. In addition, PL-PRO possesses a deubiquitinating/deISGylating activity and processes both 'Lys-48'- and 'Lys-63'-linked polyubiquitin chains from cellular substrates. Participates together with nsp4 in the assembly of virally-induced cytoplasmic double-membrane vesicles necessary for viral replication. Antagonizes innate immune induction of type I interferon by blocking the phosphorylation, dimerization and subsequent nuclear translocation of host IRF3. Also prevents host NF-kappa-B signaling. In terms of biological role, participates in the assembly of virally-induced cytoplasmic double-membrane vesicles necessary for viral replication. Cleaves the C-terminus of replicase polyprotein at 11 sites. Recognizes substrates containing the core sequence [ILMVF]-Q-|-[SGACN]. Also able to bind an ADP-ribose-1''-phosphate (ADRP). Its function is as follows. Plays a role in the initial induction of autophagosomes from host endoplasmic reticulum. Later, limits the expansion of these phagosomes that are no longer able to deliver viral components to lysosomes. Functionally, forms a hexadecamer with nsp8 (8 subunits of each) that may participate in viral replication by acting as a primase. Alternatively, may synthesize substantially longer products than oligonucleotide primers. In terms of biological role, forms a hexadecamer with nsp7 (8 subunits of each) that may participate in viral replication by acting as a primase. Alternatively, may synthesize substantially longer products than oligonucleotide primers. Forms a primer, NSP9-pU, which is utilized by the polymerase for the initiation of RNA chains. Interacts with ribosome signal recognition particle RNA (SRP). Together with NSP8, suppress protein integration into the cell membrane, thereby disrupting host immune defenses. Its function is as follows. Plays a pivotal role in viral transcription by stimulating both nsp14 3'-5' exoribonuclease and nsp16 2'-O-methyltransferase activities. Therefore plays an essential role in viral mRNAs cap methylation. Functionally, RNA-directed RNA polymerase that catalyzes the transcription of viral genomic and subgenomic RNAs. Acts in complex with nsp7 and nsp8 to transcribe both the minus and positive strands of genomic RNA. The kinase-like NiRAN domain of NSP12 attaches one or more nucleotides to the amino terminus of NSP9, forming a covalent RNA-protein intermediate that serves as transcription/replication primer. Subgenomic RNAs (sgRNAs) are formed by discontinuous transcription: The polymerase has the ability to pause at transcription-regulating sequences (TRS) and jump to the leader TRS, resulting in a major deletion. This creates a series of subgenomic RNAs that are replicated, transcribed and translated. In addition, Nsp12 is a subunit of the viral RNA capping enzyme that catalyzes the RNA guanylyltransferase reaction for genomic and sub-genomic RNAs. Subsequently, the NiRAN domain transfers RNA to GDP, and forms the core cap structure GpppA-RNA. In terms of biological role, RNA-directed RNA polymerase that catalyzes the transcription of viral genomic and subgenomic RNAs. Acts in complex with nsp7 and nsp8 to transcribe both the minus and positive strands of genomic RNA. Subgenomic RNAs (sgRNAs) are formed by discontinuous transcription: The polymerase has the ability to pause at transcription-regulating sequences (TRS) and jump to the leader TRS, resulting in a major deletion. This creates a series of subgenomic RNAs that are replicated, transcribed and translated. In addition, Nsp12 is a subunit of the viral RNA capping enzyme that catalyzes the RNA guanylyltransferase reaction for genomic and sub-genomic RNAs. The kinase-like NiRAN domain of NSP12 transfers RNA to the amino terminus of NSP9, forming a covalent RNA-protein intermediate. Subsequently, the NiRAN domain transfers RNA to GDP, and forms the core cap structure GpppA-RNA. Multi-functional protein with a zinc-binding domain in N-terminus displaying RNA and DNA duplex-unwinding activities with 5' to 3' polarity. Activity of helicase is dependent on magnesium. Its function is as follows. Plays a role in viral RNA synthesis through two distinct activities. The N7-guanine methyltransferase activity plays a role in the formation of the cap structure GpppA-RNA. The proofreading exoribonuclease reduces the sensitivity of the virus to RNA mutagens during replication. This activity acts on both ssRNA and dsRNA in a 3'-5' direction. Functionally, plays a role in viral transcription/replication and prevents the simultaneous activation of host cell dsRNA sensors, such as MDA5/IFIH1, OAS, and PKR. Acts by degrading the 5'-polyuridines generated during replication of the poly(A) region of viral genomic and subgenomic RNAs. Catalyzes a two-step reaction in which a 2'3'-cyclic phosphate (2'3'-cP) is first generated by 2'-O transesterification, which is then hydrolyzed to a 3'-phosphate (3'-P). If not degraded, poly(U) RNA would hybridize with poly(A) RNA tails and activate host dsRNA sensors. In terms of biological role, methyltransferase that mediates mRNA cap 2'-O-ribose methylation to the 5'-cap structure of viral mRNAs. N7-methyl guanosine cap is a prerequisite for binding of nsp16. Therefore plays an essential role in viral mRNAs cap methylation which is essential to evade immune system. This is Replicase polyprotein 1ab (rep) from Tylonycteris pachypus (Lesser bamboo bat).